The primary structure comprises 435 residues: Light-independent protochlorophyllide reductase subunit N (435 aa).

Residues Cys23, Cys48, and Cys108 each contribute to the [4Fe-4S] cluster site.

This sequence belongs to the BchN/ChlN family. As to quaternary structure, protochlorophyllide reductase is composed of three subunits; ChlL, ChlN and ChlB. Forms a heterotetramer of two ChlB and two ChlN subunits. It depends on [4Fe-4S] cluster as a cofactor.

It is found in the plastid. It localises to the chloroplast. The enzyme catalyses chlorophyllide a + oxidized 2[4Fe-4S]-[ferredoxin] + 2 ADP + 2 phosphate = protochlorophyllide a + reduced 2[4Fe-4S]-[ferredoxin] + 2 ATP + 2 H2O. The protein operates within porphyrin-containing compound metabolism; chlorophyll biosynthesis (light-independent). Component of the dark-operative protochlorophyllide reductase (DPOR) that uses Mg-ATP and reduced ferredoxin to reduce ring D of protochlorophyllide (Pchlide) to form chlorophyllide a (Chlide). This reaction is light-independent. The NB-protein (ChlN-ChlB) is the catalytic component of the complex. This Chlorella vulgaris (Green alga) protein is Light-independent protochlorophyllide reductase subunit N.